The primary structure comprises 360 residues: uncharacterized protein (360 aa).

Transmembrane regions (helical) follow at residues 26 to 48, 58 to 80, 89 to 111, 126 to 148, 169 to 191, 195 to 214, and 227 to 249; these read SVCY…SGAT, LHPL…ASVL, VMGL…NIAH, LSTG…SILA, RLAY…PTAL, IPSV…YALL, and CALC…SHMV.

The protein localises to the cell membrane. This is an uncharacterized protein from Treponema pallidum (strain Nichols).